Here is a 345-residue protein sequence, read N- to C-terminus: Inositol 2-dehydrogenase (345 aa).

This sequence belongs to the Gfo/Idh/MocA family. Homotetramer.

The catalysed reaction is myo-inositol + NAD(+) = scyllo-inosose + NADH + H(+). In terms of biological role, involved in the oxidation of myo-inositol (MI) to 2-keto-myo-inositol (2KMI or 2-inosose). This Mycolicibacterium smegmatis (strain ATCC 700084 / mc(2)155) (Mycobacterium smegmatis) protein is Inositol 2-dehydrogenase.